We begin with the raw amino-acid sequence, 295 residues long: Cytidine deaminase (295 aa).

CMP/dCMP-type deaminase domains are found at residues 48–168 (TDSE…FGPA) and 187–295 (KETD…YVAA). 89–91 (NME) is a substrate binding site. His102 provides a ligand contact to Zn(2+). Glu104 acts as the Proton donor in catalysis. Residues Cys129 and Cys132 each coordinate Zn(2+).

It belongs to the cytidine and deoxycytidylate deaminase family. As to quaternary structure, homodimer. It depends on Zn(2+) as a cofactor.

The enzyme catalyses cytidine + H2O + H(+) = uridine + NH4(+). The catalysed reaction is 2'-deoxycytidine + H2O + H(+) = 2'-deoxyuridine + NH4(+). In terms of biological role, this enzyme scavenges exogenous and endogenous cytidine and 2'-deoxycytidine for UMP synthesis. The polypeptide is Cytidine deaminase (Photobacterium profundum (strain SS9)).